A 331-amino-acid polypeptide reads, in one-letter code: Holliday junction branch migration complex subunit RuvB (331 aa).

The segment at Met-1–Tyr-186 is large ATPase domain (RuvB-L). Residues Ile-25, Arg-26, Gly-67, Lys-70, Thr-71, Thr-72, Glu-133–Phe-135, Arg-176, Tyr-186, and Arg-223 contribute to the ATP site. Thr-71 lines the Mg(2+) pocket. The interval Asn-187 to Ala-257 is small ATPAse domain (RuvB-S). Positions Arg-260–Val-331 are head domain (RuvB-H). 3 residues coordinate DNA: Arg-296, Arg-315, and Arg-320.

The protein belongs to the RuvB family. Homohexamer. Forms an RuvA(8)-RuvB(12)-Holliday junction (HJ) complex. HJ DNA is sandwiched between 2 RuvA tetramers; dsDNA enters through RuvA and exits via RuvB. An RuvB hexamer assembles on each DNA strand where it exits the tetramer. Each RuvB hexamer is contacted by two RuvA subunits (via domain III) on 2 adjacent RuvB subunits; this complex drives branch migration. In the full resolvosome a probable DNA-RuvA(4)-RuvB(12)-RuvC(2) complex forms which resolves the HJ.

It is found in the cytoplasm. It carries out the reaction ATP + H2O = ADP + phosphate + H(+). Functionally, the RuvA-RuvB-RuvC complex processes Holliday junction (HJ) DNA during genetic recombination and DNA repair, while the RuvA-RuvB complex plays an important role in the rescue of blocked DNA replication forks via replication fork reversal (RFR). RuvA specifically binds to HJ cruciform DNA, conferring on it an open structure. The RuvB hexamer acts as an ATP-dependent pump, pulling dsDNA into and through the RuvAB complex. RuvB forms 2 homohexamers on either side of HJ DNA bound by 1 or 2 RuvA tetramers; 4 subunits per hexamer contact DNA at a time. Coordinated motions by a converter formed by DNA-disengaged RuvB subunits stimulates ATP hydrolysis and nucleotide exchange. Immobilization of the converter enables RuvB to convert the ATP-contained energy into a lever motion, pulling 2 nucleotides of DNA out of the RuvA tetramer per ATP hydrolyzed, thus driving DNA branch migration. The RuvB motors rotate together with the DNA substrate, which together with the progressing nucleotide cycle form the mechanistic basis for DNA recombination by continuous HJ branch migration. Branch migration allows RuvC to scan DNA until it finds its consensus sequence, where it cleaves and resolves cruciform DNA. The sequence is that of Holliday junction branch migration complex subunit RuvB from Psychrobacter arcticus (strain DSM 17307 / VKM B-2377 / 273-4).